Consider the following 296-residue polypeptide: Low affinity immunoglobulin gamma Fc region receptor II (296 aa).

The first 42 residues, 1-42 (MGIPSFLAFPAARRNRAHCTPWHPWGHMLLWTALLFLAPVSG), serve as a signal peptide directing secretion. Residues 43–225 (KPDLPKAVVT…SSSSGPSSMT (183 aa)) lie on the Extracellular side of the membrane. Ig-like C2-type domains are found at residues 47–129 (PKAV…DVIS) and 130–212 (DWLL…VNIT). 2 disulfide bridges follow: cysteine 70-cysteine 112 and cysteine 151-cysteine 195. Asparagine 79, asparagine 86, asparagine 105, asparagine 179, asparagine 186, and asparagine 210 each carry an N-linked (GlcNAc...) asparagine glycan. A helical membrane pass occupies residues 226–246 (AVAIGTCFAAVAIVAAIITWF). Residues 247 to 296 (RLRRKPISAGLTDAENDAARTEAENTVTYSLLSHPDVAEEDSESDYQKRL) are Cytoplasmic-facing. The ITIM motif signature appears at 273–278 (VTYSLL). Tyrosine 275 is modified (phosphotyrosine; by SRC-type Tyr-kinases). At serine 288 the chain carries Phosphoserine. Tyrosine 292 carries the phosphotyrosine modification.

As to quaternary structure, interacts with FGR and LYN. Post-translationally, phosphorylated by SRC-type Tyr-kinases such as LYN, BLK, FYN and SYK. As to expression, higher expression is found in macrophages than in neutrophils.

It is found in the cell membrane. Functionally, binds to the Fc region of immunoglobulins gamma. Low affinity receptor. The chain is Low affinity immunoglobulin gamma Fc region receptor II (FCGR2) from Bos taurus (Bovine).